Consider the following 908-residue polypeptide: Transcriptional repressor ILP1 (908 aa).

2 disordered regions span residues 1 to 113 (MGSN…PQAG) and 238 to 277 (VGPRPQKDDKKGVFDFGDENPTAKETTTSSIYEDEDEEDK). Low complexity predominate over residues 25-47 (ATPSSKPTSTLSSSKPKTLSASA). Residues 426 to 453 (MQNKGSLIEEIEDQMKELNEKHALSILE) are a coiled coil. Residues 513–530 (EFGRDENLQKRREVEQRA) show a composition bias toward basic and acidic residues. A disordered region spans residues 513-574 (EFGRDENLQK…ESDTETSAYK (62 aa)).

This sequence belongs to the GCF family. Interacts with STIPL1/NTR1.

The protein resides in the nucleus. Its function is as follows. Transcriptional repressor regulating endoreduplication through control of A-type cyclins expression. Does not bind to promoter sequences (in vitro) and may act by interacting with tissue-specific transcription factors. Enhances the endocycle in endoreduplicating cells in seedlings. Required for efficient splicing. In Arabidopsis thaliana (Mouse-ear cress), this protein is Transcriptional repressor ILP1.